A 260-amino-acid polypeptide reads, in one-letter code: Putative enoyl-CoA hydratase/isomerase YngF (260 aa).

This sequence belongs to the enoyl-CoA hydratase/isomerase family.

This Bacillus subtilis (strain 168) protein is Putative enoyl-CoA hydratase/isomerase YngF (yngF).